The sequence spans 92 residues: MTSSRFIITVIGSDRVGIVARITTVMASYNVNIVDISQTIMQGIFTMIMLAEAPKENFDLAAFQQAMDAEGKSLGVEVKVQHEDAFRFMHRI.

The ACT domain occupies 7–81 (IITVIGSDRV…KSLGVEVKVQ (75 aa)).

The protein belongs to the UPF0237 family.

The sequence is that of UPF0237 protein MM_0082 from Methanosarcina mazei (strain ATCC BAA-159 / DSM 3647 / Goe1 / Go1 / JCM 11833 / OCM 88) (Methanosarcina frisia).